We begin with the raw amino-acid sequence, 299 residues long: Ent-kaurene oxidase-like protein 1 (299 aa).

The chain crosses the membrane as a helical span at residues 16-36 (AVVGVFVAAAVVGGFVAAVAL).

The protein belongs to the cytochrome P450 family. As to expression, expressed in roots and panicles.

Its subcellular location is the membrane. This chain is Ent-kaurene oxidase-like protein 1, found in Oryza sativa subsp. japonica (Rice).